A 343-amino-acid chain; its full sequence is Dihydroorotate dehydrogenase (quinone) (343 aa).

Residues 61 to 65 (AGLDK) and Thr85 contribute to the FMN site. Residue Lys65 participates in substrate binding. Residue 110-114 (NRMGF) coordinates substrate. FMN is bound by residues Asn138 and Asn171. Asn171 contacts substrate. The active-site Nucleophile is the Ser174. Asn176 is a binding site for substrate. FMN is bound by residues Lys216 and Thr244. 245–246 (NT) provides a ligand contact to substrate. FMN contacts are provided by residues Gly267, Gly296, and 317 to 318 (YS).

The protein belongs to the dihydroorotate dehydrogenase family. Type 2 subfamily. Monomer. It depends on FMN as a cofactor.

It localises to the cell membrane. It carries out the reaction (S)-dihydroorotate + a quinone = orotate + a quinol. Its pathway is pyrimidine metabolism; UMP biosynthesis via de novo pathway; orotate from (S)-dihydroorotate (quinone route): step 1/1. Catalyzes the conversion of dihydroorotate to orotate with quinone as electron acceptor. In Stutzerimonas stutzeri (strain A1501) (Pseudomonas stutzeri), this protein is Dihydroorotate dehydrogenase (quinone).